The following is a 530-amino-acid chain: Autoinducer-2 kinase (530 aa).

This sequence belongs to the FGGY kinase family.

Its subcellular location is the cytoplasm. The enzyme catalyses (S)-4,5-dihydroxypentane-2,3-dione + ATP = (2S)-2-hydroxy-3,4-dioxopentyl phosphate + ADP + H(+). Its function is as follows. Catalyzes the phosphorylation of autoinducer-2 (AI-2) to phospho-AI-2, which subsequently inactivates the transcriptional regulator LsrR and leads to the transcription of the lsr operon. Phosphorylates the ring-open form of (S)-4,5-dihydroxypentane-2,3-dione (DPD), which is the precursor to all AI-2 signaling molecules, at the C5 position. The protein is Autoinducer-2 kinase of Salmonella choleraesuis (strain SC-B67).